The chain runs to 436 residues: Nucleolar protein 4-like (436 aa).

The interval 1-184 (MSDSTWMSAD…KMNDSEGMDP (184 aa)) is disordered. Over residues 41-61 (SESGSGNGSSTLNPSTSSSTQ) the composition is skewed to low complexity. S130 carries the post-translational modification Phosphoserine. A compositionally biased stretch (acidic residues) spans 160 to 169 (ADDDDDDHDD). A compositionally biased stretch (basic and acidic residues) spans 170 to 184 (HEDNDKMNDSEGMDP). A Phosphoserine modification is found at S295. Residues 351–366 (QPPASLQTGNHSNGPT) show a composition bias toward polar residues. The interval 351–400 (QPPASLQTGNHSNGPTDLSMKGGASTTSTTPTPTPSSTSTSRPVPTAQLS) is disordered. The span at 375–396 (STTSTTPTPTPSSTSTSRPVPT) shows a compositional bias: low complexity.

The sequence is that of Nucleolar protein 4-like (NOL4L) from Homo sapiens (Human).